The following is an 819-amino-acid chain: Advillin (819 aa).

Residues 1 to 731 (MSLSSAFRTV…YEQLKNELGD (731 aa)) are core. One copy of the Gelsolin-like 1 repeat lies at 24-105 (MELVLVPLSA…VQYHESDTFR (82 aa)). Tyr85 is subject to Phosphotyrosine. A 1,2-diacyl-sn-glycero-3-phospho-(1D-myo-inositol-4,5-bisphosphate) contacts are provided by residues 109–116 (KRGIIYKK) and 135–143 (RLLHVKGKR). Gelsolin-like repeat units lie at residues 144–215 (NIRA…KEAA), 265–339 (TEVA…SAMF), 407–486 (LVPV…RHFM), 524–592 (NTKA…PEFW), and 631–704 (TEVT…PPTF). The segment at 628–819 (FLVTEVTDFT…LQLKKEAGLF (192 aa)) is required for interaction with F-actin. A headpiece region spans residues 731–819 (DATAIVRITT…LQLKKEAGLF (89 aa)). Residues 753-819 (ESGPKYYPVE…LQLKKEAGLF (67 aa)) enclose the HP domain. Tyr758 is subject to Phosphotyrosine.

It belongs to the villin/gelsolin family. In terms of assembly, associates (via C-terminus) with actin. Interacts with F-actin. Interacts with SCARF1; the interaction occurs in embryonic dorsal root ganglions at 18 dpc and induces neurite-like outgrowth. Interacts with PLCE1. Interacts with ACTR2 and ACTR3; associates with the ARP2/3 complex. Expressed in dorsal root ganglion (DRG) neurons and superior cervical ganglia (SCG). Expressed in podocytes.

The protein localises to the cytoplasm. It is found in the cytoskeleton. It localises to the cell projection. Its subcellular location is the neuron projection. The protein resides in the axon. The protein localises to the lamellipodium. It is found in the cell junction. It localises to the focal adhesion. Functionally, ca(2+)-regulated actin-binding protein which plays an important role in actin bundling. May have a unique function in the morphogenesis of neuronal cells which form ganglia. Required for SREC1-mediated regulation of neurite-like outgrowth. Plays a role in regenerative sensory axon outgrowth and remodeling processes after peripheral injury in neonates. Involved in the formation of long fine actin-containing filopodia-like structures in fibroblast. Plays a role in ciliogenesis. In podocytes, controls lamellipodia formation through the regulation of EGF-induced diacylglycerol generation by PLCE1 and ARP2/3 complex assembly. This Rattus norvegicus (Rat) protein is Advillin.